Here is an 809-residue protein sequence, read N- to C-terminus: MSSGQSFSHSLLKLPLSALVKGTAIPSNPIDDHHIDINKPIVYALPFRSAVDLLTLQKHALELGLPDPLSPLEIHGKSLKRYVFIASRPTLVQSDNDVPSDSIALFSDLLALHAEDSELDVQVIPATVLWGRKPGKEGNNKPYLQAMNGLQKAKAVITAGRDCLVRFSPVVSLRYMAQSHGTDSSIAHKLARVARIHFSRQKLAASGPDLPSRQVLFARLMKSPAIEQAIEEEAKNKNISMEKARKEAQDIMDEIAADFSYSLVKQGDRLLGWLWNKLYQGLNINNAATVRRLAQDGHEIVYVPCHRSHMDYLLLSYVLYHEGMVPPHIAAGINLNFFPAGPIFRRGGAFFIRRSFKGNRLYSTIFREYLAELFAKGYSVEYFSEGGRSRTGRLLPAKTGMLAMTIQAMLRGLNRPVTLVPVYIGYEHVMEVATYAKELRGKRKEKENAGLVLRTLRKLRNFGLGYVNFGEPIPLNQYLNEHAPEWTKDIDPMGASRPQWINPVVNQLANKMMTHINDAAAANALTLCATALLASRQRALSKDSLIHQIECYLQLLKNVPYSKTYTVPSESAEALVEHAISLDKFVIETDTMGDIISLDRNQSILMTYYRNNIIHLFALPSLIAQMIIRQENLTVSQIQQQVAEIYPFLKAELFLSHKEEELDELVVKVLNELVSQDLISLKEDKVAKNQANTLTLVLLGRTISETLQRYSIAFNLLVSNPELAKADLEQKSQDIAQRLTRLHGINAPEYFDKGVFASLFSTLKQQGYLDSDGNCDGEKTAQFATLLYALLYPEVKLTIEESVFQLKSA.

The HXXXXD motif motif lies at 306 to 311 (HRSHMD).

It belongs to the GPAT/DAPAT family.

The protein resides in the cell inner membrane. The enzyme catalyses sn-glycerol 3-phosphate + an acyl-CoA = a 1-acyl-sn-glycero-3-phosphate + CoA. It participates in phospholipid metabolism; CDP-diacylglycerol biosynthesis; CDP-diacylglycerol from sn-glycerol 3-phosphate: step 1/3. This Vibrio vulnificus (strain CMCP6) protein is Glycerol-3-phosphate acyltransferase.